A 210-amino-acid polypeptide reads, in one-letter code: CKLF-like MARVEL transmembrane domain-containing protein 2B (210 aa).

4 helical membrane-spanning segments follow: residues 35–55, 65–85, 103–123, and 127–147; these read FWAQ…IAAM, PIVI…FFLY, LMND…ALEA, and LPVP…ISII. The MARVEL domain occupies 35–157; the sequence is FWAQGHAECK…DLCLQRRQFK (123 aa).

This sequence belongs to the chemokine-like factor family.

The protein localises to the membrane. This is CKLF-like MARVEL transmembrane domain-containing protein 2B (Cmtm2b) from Mus musculus (Mouse).